Here is a 46-residue protein sequence, read N- to C-terminus: U-myrmeciitoxin(01)-Mg6a (46 aa).

Residues 1 to 20 form the signal peptide; it reads MNLKTFCFFLLGIFVTLTVT. Positions 21-33 are excised as a propeptide; it reads VIPIANADAEADT.

Post-translationally, contains 1 disulfide bond. In terms of tissue distribution, expressed by the venom gland.

It localises to the secreted. In Myrmecia gulosa (Red bulldog ant), this protein is U-myrmeciitoxin(01)-Mg6a.